Reading from the N-terminus, the 308-residue chain is Probable GTP 3',8-cyclase (308 aa).

One can recognise a Radical SAM core domain in the interval 4-224; the sequence is RFGRPLEDLR…QIRKKHFRPR (221 aa). Residue R13 participates in GTP binding. [4Fe-4S] cluster is bound by residues C20, C24, and C27. K60 contacts GTP. S-adenosyl-L-methionine is bound at residue G64. T90 contributes to the GTP binding site. S114 contacts S-adenosyl-L-methionine. Residue K151 participates in GTP binding. The [4Fe-4S] cluster site is built by C245 and C248. 250 to 252 serves as a coordination point for GTP; that stretch reads RIR. C262 contributes to the [4Fe-4S] cluster binding site.

The protein belongs to the radical SAM superfamily. MoaA family. Requires [4Fe-4S] cluster as cofactor.

It catalyses the reaction GTP + AH2 + S-adenosyl-L-methionine = (8S)-3',8-cyclo-7,8-dihydroguanosine 5'-triphosphate + 5'-deoxyadenosine + L-methionine + A + H(+). It participates in cofactor biosynthesis; molybdopterin biosynthesis. Its function is as follows. Catalyzes the cyclization of GTP to (8S)-3',8-cyclo-7,8-dihydroguanosine 5'-triphosphate. This Saccharolobus islandicus (strain M.16.27) (Sulfolobus islandicus) protein is Probable GTP 3',8-cyclase.